The primary structure comprises 586 residues: Malonate--CoA ligase ACSF3, mitochondrial (586 aa).

A mitochondrion-targeting transit peptide spans 1-89; it reads MPLPYVGMAL…SREICQLRAC (89 aa). ATP contacts are provided by residues 203–211, aspartate 457, arginine 471, and lysine 563; that span reads TSGTTGRPK.

It belongs to the ATP-dependent AMP-binding enzyme family.

The protein localises to the mitochondrion. It carries out the reaction tetracosanoate + ATP + CoA = tetracosanoyl-CoA + AMP + diphosphate. The catalysed reaction is malonate + ATP + CoA = malonyl-CoA + AMP + diphosphate. Catalyzes the initial reaction in intramitochondrial fatty acid synthesis, by activating malonate and methylmalonate, but not acetate, into their respective CoA thioester. May have some preference toward very-long-chain substrates. This chain is Malonate--CoA ligase ACSF3, mitochondrial, found in Bos taurus (Bovine).